The primary structure comprises 191 residues: Protein HP-20 homolog (191 aa).

Positions methionine 1–alanine 16 are cleaved as a signal peptide. Residues glycine 22 to glycine 58 enclose the Collagen-like domain. The segment at glycine 22–valine 61 is disordered. Residues proline 26–arginine 39 show a composition bias toward pro residues. Positions proline 64 to threonine 191 constitute a C1q domain.

It localises to the secreted. This is Protein HP-20 homolog from Bos taurus (Bovine).